We begin with the raw amino-acid sequence, 344 residues long: tRNA N6-adenosine threonylcarbamoyltransferase (344 aa).

Fe cation-binding residues include His-110 and His-114. Residues 133–137 (VVSGA), Asp-166, Gly-179, and Asn-278 each bind substrate. Residue Asp-303 coordinates Fe cation.

It belongs to the KAE1 / TsaD family. Fe(2+) is required as a cofactor.

The protein localises to the cytoplasm. It carries out the reaction L-threonylcarbamoyladenylate + adenosine(37) in tRNA = N(6)-L-threonylcarbamoyladenosine(37) in tRNA + AMP + H(+). Functionally, required for the formation of a threonylcarbamoyl group on adenosine at position 37 (t(6)A37) in tRNAs that read codons beginning with adenine. Is involved in the transfer of the threonylcarbamoyl moiety of threonylcarbamoyl-AMP (TC-AMP) to the N6 group of A37, together with TsaE and TsaB. TsaD likely plays a direct catalytic role in this reaction. This chain is tRNA N6-adenosine threonylcarbamoyltransferase, found in Chlamydia pneumoniae (Chlamydophila pneumoniae).